Here is an 842-residue protein sequence, read N- to C-terminus: Translation initiation factor IF-2 (842 aa).

Disordered stretches follow at residues M1–D41 and R112–Q219. Composition is skewed to basic and acidic residues over residues P32–D41 and R153–S165. One can recognise a tr-type G domain in the interval A328 to R497. The tract at residues G337–T344 is G1. GTP is bound at residue G337–T344. The tract at residues G362–H366 is G2. A G3 region spans residues D383 to G386. GTP contacts are provided by residues D383–H387 and N437–D440. Positions N437–D440 are G4. Residues S473–L475 are G5.

It belongs to the TRAFAC class translation factor GTPase superfamily. Classic translation factor GTPase family. IF-2 subfamily.

The protein resides in the cytoplasm. Functionally, one of the essential components for the initiation of protein synthesis. Protects formylmethionyl-tRNA from spontaneous hydrolysis and promotes its binding to the 30S ribosomal subunits. Also involved in the hydrolysis of GTP during the formation of the 70S ribosomal complex. In Treponema pallidum (strain Nichols), this protein is Translation initiation factor IF-2 (infB).